The following is a 627-amino-acid chain: MDYSFDTTAEDPWVRISDCIKNLFSPIMTENHSHMPLQPNVSLSEGDGTQGHPDGTPPKLETANGTPKVYRPADSSTVKKGPPVAPKPAWFRQSLKGLRNRASDPRRLPDPALSVQPVPASREHPGPHTQASSIKQRISSFETFGSSQRLDKGAQRLSLQLSSGEAAKPVGKHEGGRLPGLLGRGAVPTLAPQETEQVLPSGSPAASEATDPGVSESPPPGRQPSEKTLPPSPDPLLRLLPTQTEESQGPVLKMPSQRARSFPLTRSQSCETKLLDEKTSKLYSISSQVSSAVMKSLLCLPSSISWGQAPCIPKEGASPTSLSNEDSAANGCAETSGSDTGFSLNLSELREYTEGLTEAKEADDGDHSSPQSGQSVISLLSSEELKQLIEEVKDLDEATLKQLDSIHVTILHKEEGAGLGFSLAGGADLENKVITVHRVFPNGLASQEGTIQKGNEVLSINGKSLKGTTHNDALAILRQAREPRQAVIVTRKLTPETVPDLNSSTDSAASASAASDVSVDSTAEATVCTVTLEKMSGGLGFSLEGGKGSLQGDKPLTINRIFKGAASEQSETVQPGDEILHLAGTAMQGLTRFEAWNIIKALPDGPVTIVIKRKSMQSKGTSAAGDS.

Disordered stretches follow at residues 34-136, 162-267, and 316-337; these read HMPL…SIKQ, SSGE…LTRS, and GASP…ETSG. Serine 217 is modified (phosphoserine). Residues 318–337 are compositionally biased toward polar residues; the sequence is SPTSLSNEDSAANGCAETSG. An interaction with PPP1R12A, PPP1R12B and PPP1R12C region spans residues 401-497; it reads KQLDSIHVTI…IVTRKLTPET (97 aa). 2 consecutive PDZ domains span residues 407-492 and 529-614; these read HVTI…VTRK and TVTL…IKRK.

Homotetramer. Pro-interleukin-16 interacts (via PDZ 2 domain) with PPP1R12A, PPP1R12B and PPP1R12C. Pro-interleukin-16 interacts with GRIN2A. Pro-interleukin-16 interacts with GABPB1. Pro-interleukin-16 interacts (via PDZ 3 domain) with HDAC3.

The protein resides in the secreted. Its subcellular location is the cytoplasm. It is found in the nucleus. Its function is as follows. Interleukin-16 stimulates a migratory response in CD4+ lymphocytes, monocytes, and eosinophils. Primes CD4+ T-cells for IL-2 and IL-15 responsiveness. Also induces T-lymphocyte expression of interleukin 2 receptor. Ligand for CD4. Functionally, pro-interleukin-16 is involved in cell cycle progression in T-cells. Appears to be involved in transcriptional regulation of SKP2 and is probably part of a transcriptional repression complex on the core promoter of the SKP2 gene. May act as a scaffold for GABPB1 (the DNA-binding subunit the GABP transcription factor complex) and HDAC3 thus maintaining transcriptional repression and blocking cell cycle progression in resting T-cells. The sequence is that of Pro-interleukin-16 (IL16) from Saimiri sciureus (Common squirrel monkey).